The following is a 354-amino-acid chain: Magnesium-protoporphyrin IX monomethyl ester [oxidative] cyclase (354 aa).

It belongs to the AcsF family. Fe cation is required as a cofactor.

It is found in the plastid. The protein resides in the chloroplast. The catalysed reaction is Mg-protoporphyrin IX 13-monomethyl ester + 3 NADPH + 3 O2 + 2 H(+) = 3,8-divinyl protochlorophyllide a + 3 NADP(+) + 5 H2O. It participates in porphyrin-containing compound metabolism; chlorophyll biosynthesis (light-independent). Functionally, catalyzes the formation of the isocyclic ring in chlorophyll biosynthesis. Mediates the cyclase reaction, which results in the formation of divinylprotochlorophyllide (Pchlide) characteristic of all chlorophylls from magnesium-protoporphyrin IX 13-monomethyl ester (MgPMME). This is Magnesium-protoporphyrin IX monomethyl ester [oxidative] cyclase from Cyanidium caldarium (Red alga).